A 280-amino-acid polypeptide reads, in one-letter code: Thymidylate synthase (280 aa).

Position 21 (Arg21) interacts with dUMP. A (6R)-5,10-methylene-5,6,7,8-tetrahydrofolate-binding site is contributed by His51. Residue 142 to 143 (RR) participates in dUMP binding. Catalysis depends on Cys162, which acts as the Nucleophile. DUMP contacts are provided by residues 182-185 (RSAD), Asn193, and 223-225 (HLY). Asp185 serves as a coordination point for (6R)-5,10-methylene-5,6,7,8-tetrahydrofolate. (6R)-5,10-methylene-5,6,7,8-tetrahydrofolate is bound at residue Ala279.

The protein belongs to the thymidylate synthase family. Bacterial-type ThyA subfamily. As to quaternary structure, homodimer.

The protein resides in the cytoplasm. It carries out the reaction dUMP + (6R)-5,10-methylene-5,6,7,8-tetrahydrofolate = 7,8-dihydrofolate + dTMP. It participates in pyrimidine metabolism; dTTP biosynthesis. Its function is as follows. Catalyzes the reductive methylation of 2'-deoxyuridine-5'-monophosphate (dUMP) to 2'-deoxythymidine-5'-monophosphate (dTMP) while utilizing 5,10-methylenetetrahydrofolate (mTHF) as the methyl donor and reductant in the reaction, yielding dihydrofolate (DHF) as a by-product. This enzymatic reaction provides an intracellular de novo source of dTMP, an essential precursor for DNA biosynthesis. This Acinetobacter baylyi (strain ATCC 33305 / BD413 / ADP1) protein is Thymidylate synthase.